A 1270-amino-acid chain; its full sequence is DNA-directed RNA polymerase subunit beta (1270 aa).

Belongs to the RNA polymerase beta chain family. The RNAP catalytic core consists of 2 alpha, 1 beta, 1 beta' and 1 omega subunit. When a sigma factor is associated with the core the holoenzyme is formed, which can initiate transcription.

It catalyses the reaction RNA(n) + a ribonucleoside 5'-triphosphate = RNA(n+1) + diphosphate. DNA-dependent RNA polymerase catalyzes the transcription of DNA into RNA using the four ribonucleoside triphosphates as substrates. In Phocaeicola vulgatus (strain ATCC 8482 / DSM 1447 / JCM 5826 / CCUG 4940 / NBRC 14291 / NCTC 11154) (Bacteroides vulgatus), this protein is DNA-directed RNA polymerase subunit beta.